A 626-amino-acid polypeptide reads, in one-letter code: MDEQEALNSIMNDLVALQMNRRHRMPGYETMKNKDTGHSNRQSDVRIKFEHNGERRIIAFSRPVKYEDVEHKVTTVFGQPLDLHYMNNELSILLKNQDDLDKAIDILDRSSSMKSLRILLLSQDRNHNSSSPHSGVSRQVRIKASQSAGDINTIYQPPEPRSRHLSVSSQNPGRSSPPPGYVPERQQHIARQGSYTSINSEGEFIPETSEQCMLDPLSSAENSLSGSCQSLDRSADSPSFRKSRMSRAQSFPDNRQEYSDRETQLYDKGVKGGTYPRRYHVSVHHKDYSDGRRTFPRIRRHQGNLFTLVPSSRSLSTNGENMGLAVQYLDPRGRLRSADSENALSVQERNVPTKSPSAPINWRRGKLLGQGAFGRVYLCYDVDTGRELASKQVQFDPDSPETSKEVSALECEIQLLKNLQHERIVQYYGCLRDRAEKTLTIFMEYMPGGSVKDQLKAYGALTESVTRKYTRQILEGMSYLHSNMIVHRDIKGANILRDSAGNVKLGDFGASKRLQTICMSGTGMRSVTGTPYWMSPEVISGEGYGRKADVWSLGCTVVEMLTEKPPWAEYEAMAAIFKIATQPTNPQLPSHISEHGRDFLRRIFVEARQRPSAEELLTHHFAQLMY.

The PB1 domain maps to 44-123; that stretch reads DVRIKFEHNG…KSLRILLLSQ (80 aa). 3 stretches are compositionally biased toward polar residues: residues 146–155, 165–174, and 219–232; these read QSAGDINTIY, LSVSSQNPGR, and SAENSLSGSCQSLD. Disordered regions lie at residues 146–184 and 218–262; these read QSAGDINTIYQPPEPRSRHLSVSSQNPGRSSPPPGYVPE and SSAE…SDRE. At Ser147 the chain carries Phosphoserine. Ser166 is subject to Phosphoserine; by SGK1. Phosphoserine is present on residues Ser250 and Ser312. Ser337 bears the Phosphoserine; by SGK1 mark. At Ser340 the chain carries Phosphoserine. Residues 362–622 form the Protein kinase domain; the sequence is WRRGKLLGQG…AEELLTHHFA (261 aa). Residues 368–376 and Lys391 contribute to the ATP site; that span reads LGQGAFGRV. Asp489 acts as the Proton acceptor in catalysis.

Belongs to the protein kinase superfamily. STE Ser/Thr protein kinase family. MAP kinase kinase kinase subfamily. As to quaternary structure, binds both upstream activators and downstream substrates in multimolecular complexes. Part of a complex with MAP2K3, RAC1 and CCM2. Interacts with MAP2K5 and SPAG9. It depends on Mg(2+) as a cofactor. In terms of processing, phosphorylation at Ser-166 and Ser-337 by SGK1 inhibits its activity.

It carries out the reaction L-seryl-[protein] + ATP = O-phospho-L-seryl-[protein] + ADP + H(+). The enzyme catalyses L-threonyl-[protein] + ATP = O-phospho-L-threonyl-[protein] + ADP + H(+). Its activity is regulated as follows. Activated by phosphorylation on Thr-530. Component of a protein kinase signal transduction cascade. Mediates activation of the NF-kappa-B, AP1 and DDIT3 transcriptional regulators. This is Mitogen-activated protein kinase kinase kinase 3 (MAP3K3) from Homo sapiens (Human).